The following is a 451-amino-acid chain: Chromosomal replication initiator protein DnaA (451 aa).

Residues 1-73 (MNAHPKEIWE…IRSLQMVTSQ (73 aa)) form a domain I, interacts with DnaA modulators region. The segment at 73-112 (QKYNVKFLISSELPEEFLTLDTINEQNIKGSIIVSDEMSA) is domain II. Residues 113–329 (MLNPKYTFTS…GALIRIVAFS (217 aa)) form a domain III, AAA+ region region. The ATP site is built by glycine 157, glycine 159, lysine 160, and threonine 161. The domain IV, binds dsDNA stretch occupies residues 330–451 (SLTNKEISVD…NDLTKRLDQQ (122 aa)).

This sequence belongs to the DnaA family. Oligomerizes as a right-handed, spiral filament on DNA at oriC.

It is found in the cytoplasm. Functionally, plays an essential role in the initiation and regulation of chromosomal replication. ATP-DnaA binds to the origin of replication (oriC) to initiate formation of the DNA replication initiation complex once per cell cycle. Binds the DnaA box (a 9 base pair repeat at the origin) and separates the double-stranded (ds)DNA. Forms a right-handed helical filament on oriC DNA; dsDNA binds to the exterior of the filament while single-stranded (ss)DNA is stabiized in the filament's interior. The ATP-DnaA-oriC complex binds and stabilizes one strand of the AT-rich DNA unwinding element (DUE), permitting loading of DNA polymerase. After initiation quickly degrades to an ADP-DnaA complex that is not apt for DNA replication. Binds acidic phospholipids. This chain is Chromosomal replication initiator protein DnaA, found in Clostridium kluyveri (strain NBRC 12016).